Here is a 441-residue protein sequence, read N- to C-terminus: Trigger factor (441 aa).

The PPIase FKBP-type domain occupies 161–246 (GDKVTIDFLG…VHEVLGEKLP (86 aa)).

It belongs to the FKBP-type PPIase family. Tig subfamily.

It is found in the cytoplasm. It carries out the reaction [protein]-peptidylproline (omega=180) = [protein]-peptidylproline (omega=0). Functionally, involved in protein export. Acts as a chaperone by maintaining the newly synthesized protein in an open conformation. Functions as a peptidyl-prolyl cis-trans isomerase. This chain is Trigger factor, found in Teredinibacter turnerae (strain ATCC 39867 / T7901).